Here is an 87-residue protein sequence, read N- to C-terminus: Small ribosomal subunit protein bS20 (87 aa).

Positions 1 to 15 (MANHKSAMKRIKQTA) are enriched in basic residues. A disordered region spans residues 1–27 (MANHKSAMKRIKQTAKRTERNKHERST). The segment covering 16-27 (KRTERNKHERST) has biased composition (basic and acidic residues).

Belongs to the bacterial ribosomal protein bS20 family.

Its function is as follows. Binds directly to 16S ribosomal RNA. The protein is Small ribosomal subunit protein bS20 of Citrifermentans bemidjiense (strain ATCC BAA-1014 / DSM 16622 / JCM 12645 / Bem) (Geobacter bemidjiensis).